Reading from the N-terminus, the 217-residue chain is Oxygen regulatory protein NreC (217 aa).

Residues 2-119 form the Response regulatory domain; the sequence is KIVIADDHAV…QLLLAIRTVY (118 aa). Aspartate 53 bears the 4-aspartylphosphate mark. Positions 148 to 213 constitute an HTH luxR-type domain; it reads TSDPFKILSK…ELVEYALKKK (66 aa). Residues 172-191 constitute a DNA-binding region (H-T-H motif); it reads NKEIAEKLFVSVKTVEAHKT.

In terms of processing, phosphorylated by NreB.

The protein resides in the cytoplasm. Member of the two-component regulatory system NreB/NreC involved in the control of dissimilatory nitrate/nitrite reduction in response to oxygen. Phosphorylated NreC binds to a GC-rich palindromic sequence at the promoters of the nitrate (narGHJI) and nitrite (nir) reductase operons, as well as the putative nitrate transporter gene narT, and activates their expression. The chain is Oxygen regulatory protein NreC (nreC) from Staphylococcus aureus (strain bovine RF122 / ET3-1).